Here is a 212-residue protein sequence, read N- to C-terminus: Phosphoenolpyruvate guanylyltransferase (212 aa).

Phosphoenolpyruvate contacts are provided by Thr139, Gly155, and Ser158.

The protein belongs to the CofC family.

The enzyme catalyses phosphoenolpyruvate + GTP + H(+) = enolpyruvoyl-2-diphospho-5'-guanosine + diphosphate. It functions in the pathway cofactor biosynthesis; coenzyme F420 biosynthesis. Its function is as follows. Guanylyltransferase that catalyzes the activation of phosphoenolpyruvate (PEP) as enolpyruvoyl-2-diphospho-5'-guanosine, via the condensation of PEP with GTP. It is involved in the biosynthesis of coenzyme F420, a hydride carrier cofactor. In Streptomyces coelicolor (strain ATCC BAA-471 / A3(2) / M145), this protein is Phosphoenolpyruvate guanylyltransferase.